The chain runs to 117 residues: Immunoglobulin kappa variable 1-9 (117 aa).

A signal peptide spans 1-22 (MDMRVPAQLLGLLLLWLPGARC). A framework-1 region spans residues 23–45 (DIQLTQSPSFLSASVGDRVTITC). The Ig-like domain occupies 24–117 (IQLTQSPSFL…YYCQQLNSYP (94 aa)). Cysteine 45 and cysteine 110 form a disulfide bridge. Residues 46–56 (RASQGISSYLA) form a complementarity-determining-1 region. The tract at residues 57-71 (WYQQKPGKAPKLLIY) is framework-2. The tract at residues 72 to 78 (AASTLQS) is complementarity-determining-2. The tract at residues 79-110 (GVPSRFSGSGSGTEFTLTISSLQPEDFATYYC) is framework-3. The complementarity-determining-3 stretch occupies residues 111–117 (QQLNSYP).

In terms of assembly, immunoglobulins are composed of two identical heavy chains and two identical light chains; disulfide-linked.

The protein resides in the secreted. It localises to the cell membrane. V region of the variable domain of immunoglobulin light chains that participates in the antigen recognition. Immunoglobulins, also known as antibodies, are membrane-bound or secreted glycoproteins produced by B lymphocytes. In the recognition phase of humoral immunity, the membrane-bound immunoglobulins serve as receptors which, upon binding of a specific antigen, trigger the clonal expansion and differentiation of B lymphocytes into immunoglobulins-secreting plasma cells. Secreted immunoglobulins mediate the effector phase of humoral immunity, which results in the elimination of bound antigens. The antigen binding site is formed by the variable domain of one heavy chain, together with that of its associated light chain. Thus, each immunoglobulin has two antigen binding sites with remarkable affinity for a particular antigen. The variable domains are assembled by a process called V-(D)-J rearrangement and can then be subjected to somatic hypermutations which, after exposure to antigen and selection, allow affinity maturation for a particular antigen. The sequence is that of Immunoglobulin kappa variable 1-9 from Homo sapiens (Human).